The chain runs to 284 residues: D-tagatose-1,6-bisphosphate aldolase subunit GatY (284 aa).

Catalysis depends on D82, which acts as the Proton donor. H83 and H180 together coordinate Zn(2+). G181 is a binding site for dihydroxyacetone phosphate. Residue H208 coordinates Zn(2+). Residues 209–211 (GAS) and 230–233 (NVAT) contribute to the dihydroxyacetone phosphate site.

This sequence belongs to the class II fructose-bisphosphate aldolase family. TagBP aldolase GatY subfamily. Forms a complex with GatZ. Zn(2+) serves as cofactor.

The enzyme catalyses D-tagatofuranose 1,6-bisphosphate = D-glyceraldehyde 3-phosphate + dihydroxyacetone phosphate. It functions in the pathway carbohydrate metabolism; D-tagatose 6-phosphate degradation; D-glyceraldehyde 3-phosphate and glycerone phosphate from D-tagatose 6-phosphate: step 2/2. Its function is as follows. Catalytic subunit of the tagatose-1,6-bisphosphate aldolase GatYZ, which catalyzes the reversible aldol condensation of dihydroxyacetone phosphate (DHAP or glycerone-phosphate) with glyceraldehyde 3-phosphate (G3P) to produce tagatose 1,6-bisphosphate (TBP). Requires GatZ subunit for full activity and stability. Is involved in the catabolism of galactitol. The chain is D-tagatose-1,6-bisphosphate aldolase subunit GatY from Escherichia coli (strain K12 / MC4100 / BW2952).